The chain runs to 158 residues: Crossover junction endodeoxyribonuclease RuvC (158 aa).

Active-site residues include Asp7, Glu66, and Asp139. Residues Asp7, Glu66, and Asp139 each coordinate Mg(2+).

It belongs to the RuvC family. As to quaternary structure, homodimer which binds Holliday junction (HJ) DNA. The HJ becomes 2-fold symmetrical on binding to RuvC with unstacked arms; it has a different conformation from HJ DNA in complex with RuvA. In the full resolvosome a probable DNA-RuvA(4)-RuvB(12)-RuvC(2) complex forms which resolves the HJ. The cofactor is Mg(2+).

It is found in the cytoplasm. The enzyme catalyses Endonucleolytic cleavage at a junction such as a reciprocal single-stranded crossover between two homologous DNA duplexes (Holliday junction).. In terms of biological role, the RuvA-RuvB-RuvC complex processes Holliday junction (HJ) DNA during genetic recombination and DNA repair. Endonuclease that resolves HJ intermediates. Cleaves cruciform DNA by making single-stranded nicks across the HJ at symmetrical positions within the homologous arms, yielding a 5'-phosphate and a 3'-hydroxyl group; requires a central core of homology in the junction. The consensus cleavage sequence is 5'-(A/T)TT(C/G)-3'. Cleavage occurs on the 3'-side of the TT dinucleotide at the point of strand exchange. HJ branch migration catalyzed by RuvA-RuvB allows RuvC to scan DNA until it finds its consensus sequence, where it cleaves and resolves the cruciform DNA. This is Crossover junction endodeoxyribonuclease RuvC from Campylobacter jejuni subsp. jejuni serotype O:6 (strain 81116 / NCTC 11828).